The primary structure comprises 458 residues: Bifunctional protein GlmU (458 aa).

Residues 1 to 231 (MSNRALSVVV…QTEVEGVNNR (231 aa)) form a pyrophosphorylase region. Residues 11–14 (LAAG), Lys25, Gln78, 83–84 (GT), 105–107 (YGD), Gly142, Glu156, Asn171, and Asn229 contribute to the UDP-N-acetyl-alpha-D-glucosamine site. Mg(2+) is bound at residue Asp107. Asn229 serves as a coordination point for Mg(2+). Positions 232–252 (LQLARLERLFQREQAERLLLA) are linker. An N-acetyltransferase region spans residues 253-458 (GVMLSDPDRF…ANWTRPVKKK (206 aa)). The UDP-N-acetyl-alpha-D-glucosamine site is built by Arg335 and Lys353. The active-site Proton acceptor is the His365. UDP-N-acetyl-alpha-D-glucosamine is bound by residues Tyr368 and Asn379. Acetyl-CoA-binding positions include Ala382, 388–389 (NY), Ser407, Ala425, and Arg442.

In the N-terminal section; belongs to the N-acetylglucosamine-1-phosphate uridyltransferase family. The protein in the C-terminal section; belongs to the transferase hexapeptide repeat family. Homotrimer. Mg(2+) serves as cofactor.

The protein localises to the cytoplasm. The catalysed reaction is alpha-D-glucosamine 1-phosphate + acetyl-CoA = N-acetyl-alpha-D-glucosamine 1-phosphate + CoA + H(+). It carries out the reaction N-acetyl-alpha-D-glucosamine 1-phosphate + UTP + H(+) = UDP-N-acetyl-alpha-D-glucosamine + diphosphate. It participates in nucleotide-sugar biosynthesis; UDP-N-acetyl-alpha-D-glucosamine biosynthesis; N-acetyl-alpha-D-glucosamine 1-phosphate from alpha-D-glucosamine 6-phosphate (route II): step 2/2. It functions in the pathway nucleotide-sugar biosynthesis; UDP-N-acetyl-alpha-D-glucosamine biosynthesis; UDP-N-acetyl-alpha-D-glucosamine from N-acetyl-alpha-D-glucosamine 1-phosphate: step 1/1. The protein operates within bacterial outer membrane biogenesis; LPS lipid A biosynthesis. Its function is as follows. Catalyzes the last two sequential reactions in the de novo biosynthetic pathway for UDP-N-acetylglucosamine (UDP-GlcNAc). The C-terminal domain catalyzes the transfer of acetyl group from acetyl coenzyme A to glucosamine-1-phosphate (GlcN-1-P) to produce N-acetylglucosamine-1-phosphate (GlcNAc-1-P), which is converted into UDP-GlcNAc by the transfer of uridine 5-monophosphate (from uridine 5-triphosphate), a reaction catalyzed by the N-terminal domain. This is Bifunctional protein GlmU from Sodalis glossinidius (strain morsitans).